The sequence spans 217 residues: Large ribosomal subunit protein uL3 (217 aa).

At Gln152 the chain carries N5-methylglutamine.

This sequence belongs to the universal ribosomal protein uL3 family. As to quaternary structure, part of the 50S ribosomal subunit. Forms a cluster with proteins L14 and L19. In terms of processing, methylated by PrmB.

Its function is as follows. One of the primary rRNA binding proteins, it binds directly near the 3'-end of the 23S rRNA, where it nucleates assembly of the 50S subunit. This chain is Large ribosomal subunit protein uL3, found in Blochmanniella pennsylvanica (strain BPEN).